The chain runs to 444 residues: Vacuolar protein sorting-associated protein 4B (444 aa).

One can recognise an MIT domain in the interval 4–82 (TSPNLQKAID…KEYLKNKEKK (79 aa)). Positions 19–82 (AQEDKAGNYE…KEYLKNKEKK (64 aa)) form a coiled coil. Over residues 78–88 (NKEKKAQKPVK) the composition is skewed to basic and acidic residues. The disordered stretch occupies residues 78-117 (NKEKKAQKPVKEGQPSPADEKGNDSDGEGESDDPEKKKLQ). Residues Ser93, Ser102, and Ser108 each carry the phosphoserine modification. 174 to 181 (GPPGTGKS) contributes to the ATP binding site. Ser410 carries the phosphoserine modification.

The protein belongs to the AAA ATPase family. As to quaternary structure, proposed to be monomeric or homodimeric in nucleotide-free form and to oligomerize upon binding to ATP to form two stacked hexameric or heptameric rings with a central pore through which ESCRT-III substrates are translocated in an ATP-dependent manner. In vitro, associates on the inside of a helical tubular structure formed by a CHMP2A-CHMP3 polymer. Interacts with CHMP1A, CHMP1B, CHMP2A, CHMP4B and CHMP6. Interacts with VPS4A; the interaction suggests a heteromeric assembly with VPS4A. Interacts with VTA1.

It is found in the late endosome membrane. The enzyme catalyses ATP + H2O = ADP + phosphate + H(+). Functionally, involved in late steps of the endosomal multivesicular bodies (MVB) pathway. Recognizes membrane-associated ESCRT-III assemblies and catalyzes their disassembly, possibly in combination with membrane fission. Redistributes the ESCRT-III components to the cytoplasm for further rounds of MVB sorting. MVBs contain intraluminal vesicles (ILVs) that are generated by invagination and scission from the limiting membrane of the endosome and mostly are delivered to lysosomes enabling degradation of membrane proteins, such as stimulated growth factor receptors, lysosomal enzymes and lipids. VPS4A/B are required for the exosomal release of SDCBP, CD63 and syndecan. Its function is as follows. (Microbial infection) In conjunction with the ESCRT machinery also appears to function in topologically equivalent membrane fission events, such as the terminal stages of cytokinesis and enveloped virus budding (lentiviruses). The sequence is that of Vacuolar protein sorting-associated protein 4B (VPS4B) from Pongo abelii (Sumatran orangutan).